Here is a 98-residue protein sequence, read N- to C-terminus: NADH-ubiquinone oxidoreductase chain 4L (98 aa).

3 helical membrane passes run 1–21 (MSMV…GLLM), 29–49 (SLLC…MTIL), and 61–81 (IILL…LVMV).

Belongs to the complex I subunit 4L family. In terms of assembly, core subunit of respiratory chain NADH dehydrogenase (Complex I) which is composed of 45 different subunits.

The protein resides in the mitochondrion inner membrane. The catalysed reaction is a ubiquinone + NADH + 5 H(+)(in) = a ubiquinol + NAD(+) + 4 H(+)(out). Its function is as follows. Core subunit of the mitochondrial membrane respiratory chain NADH dehydrogenase (Complex I) which catalyzes electron transfer from NADH through the respiratory chain, using ubiquinone as an electron acceptor. Part of the enzyme membrane arm which is embedded in the lipid bilayer and involved in proton translocation. The polypeptide is NADH-ubiquinone oxidoreductase chain 4L (MT-ND4L) (Otaria byronia (South American sea lion)).